Consider the following 407-residue polypeptide: (R)-phenyllactyl-CoA dehydratase alpha subunit (407 aa).

Positions 1-4 (MSDR) are excised as a propeptide.

Belongs to the FldB/FldC dehydratase alpha/beta subunit family. As to quaternary structure, part of the heterotrimeric phenyllactate dehydratase complex FldABC, composed of (R)-phenyllactate CoA-transferase (FldA) and a heterodimeric (R)-phenyllactyl-CoA dehydratase (FldB and FldC). It depends on [4Fe-4S] cluster as a cofactor. Requires No flavin could be detected in the FldABC complex, and the addition of FAD, FMN or riboflavin to the dehydratase do not increase enzymatic activity. as cofactor.

The enzyme catalyses (R)-3-phenyllactoyl-CoA = (E)-cinnamoyl-CoA + H2O. It catalyses the reaction (R)-3-(4-hydroxyphenyl)lactoyl-CoA = (E)-4-coumaroyl-CoA + H2O. The catalysed reaction is (R)-3-(indol-3-yl)lactoyl-CoA = (E)-3-(indol-3-yl)acryloyl-CoA + H2O. Its pathway is amino-acid degradation; L-phenylalanine degradation. Its function is as follows. Component of the phenyllactate dehydratase complex FldABC that is involved in the fermentation of L-phenylalanine via a Stickland reaction. This complex catalyzes the reversible syn-dehydration of (R)-phenyllactate to (E)-cinnamate in two steps, a CoA-transfer from cinnamoyl-CoA to phenyllactate, catalyzed by FldA, followed by the dehydration of phenyllactyl-CoA to cinnamoyl-CoA, catalyzed by FldB and FldC. Requires the activator FldI to initiate catalysis. In Clostridium sporogenes, this protein is (R)-phenyllactyl-CoA dehydratase alpha subunit.